Here is a 130-residue protein sequence, read N- to C-terminus: 8-oxo-dGTP diphosphatase (130 aa).

The region spanning 1–128 is the Nudix hydrolase domain; sequence MKYTNIVIGI…IIHDLQKMIF (128 aa). Gly36 and Glu56 together coordinate Mg(2+). The Nudix box signature appears at 37 to 58; that stretch reads GKVKENENLTYSLKRELSEEVG.

The protein belongs to the Nudix hydrolase family. It depends on Mg(2+) as a cofactor.

It catalyses the reaction 8-oxo-dGTP + H2O = 8-oxo-dGMP + diphosphate + H(+). The enzyme catalyses 8-oxo-GTP + H2O = 8-oxo-GMP + diphosphate + H(+). In terms of biological role, specifically hydrolyzes both 8-oxo-deoxyguanosine triphosphate (8-oxo-dGTP) and 8-oxo-guanosine triphosphate (8-oxo-GTP) to the related monophosphates, thereby cleaning up the nucleotide pools and preventing misincorporation of 8-oxoGua into DNA and RNA. It prevents replicational errors by removing an oxidatively damaged form of guanine (8-oxo-dGTP) from DNA and the nucleotide pool. 8-oxo-dGTP can be inserted opposite dA and dC residues of template DNA with almost equal efficiency thus leading to A.T to G.C transversions. The protein is 8-oxo-dGTP diphosphatase (mutT) of Buchnera aphidicola subsp. Schizaphis graminum (strain Sg).